Reading from the N-terminus, the 201-residue chain is ATP-dependent Clp protease proteolytic subunit (201 aa).

S98 acts as the Nucleophile in catalysis. H123 is a catalytic residue.

Belongs to the peptidase S14 family. Fourteen ClpP subunits assemble into 2 heptameric rings which stack back to back to give a disk-like structure with a central cavity, resembling the structure of eukaryotic proteasomes.

The protein localises to the cytoplasm. It catalyses the reaction Hydrolysis of proteins to small peptides in the presence of ATP and magnesium. alpha-casein is the usual test substrate. In the absence of ATP, only oligopeptides shorter than five residues are hydrolyzed (such as succinyl-Leu-Tyr-|-NHMec, and Leu-Tyr-Leu-|-Tyr-Trp, in which cleavage of the -Tyr-|-Leu- and -Tyr-|-Trp bonds also occurs).. Functionally, cleaves peptides in various proteins in a process that requires ATP hydrolysis. Has a chymotrypsin-like activity. Plays a major role in the degradation of misfolded proteins. The polypeptide is ATP-dependent Clp protease proteolytic subunit (Rickettsia peacockii (strain Rustic)).